The chain runs to 302 residues: Light-independent protochlorophyllide reductase iron-sulfur ATP-binding protein (302 aa).

ATP-binding positions include 46–51 (GIGKST) and lysine 75. Residue serine 50 coordinates Mg(2+). 2 residues coordinate [4Fe-4S] cluster: cysteine 131 and cysteine 165. 216-217 (NR) serves as a coordination point for ATP.

Belongs to the NifH/BchL/ChlL family. Homodimer. Protochlorophyllide reductase is composed of three subunits; BchL, BchN and BchB. The cofactor is [4Fe-4S] cluster.

It carries out the reaction chlorophyllide a + oxidized 2[4Fe-4S]-[ferredoxin] + 2 ADP + 2 phosphate = protochlorophyllide a + reduced 2[4Fe-4S]-[ferredoxin] + 2 ATP + 2 H2O. It functions in the pathway porphyrin-containing compound metabolism; bacteriochlorophyll biosynthesis (light-independent). Component of the dark-operative protochlorophyllide reductase (DPOR) that uses Mg-ATP and reduced ferredoxin to reduce ring D of protochlorophyllide (Pchlide) to form chlorophyllide a (Chlide). This reaction is light-independent. The L component serves as a unique electron donor to the NB-component of the complex, and binds Mg-ATP. This chain is Light-independent protochlorophyllide reductase iron-sulfur ATP-binding protein, found in Methylocella silvestris (strain DSM 15510 / CIP 108128 / LMG 27833 / NCIMB 13906 / BL2).